A 477-amino-acid chain; its full sequence is NADH-quinone oxidoreductase subunit N (477 aa).

13 helical membrane-spanning segments follow: residues 7–27 (VLAHALPELILAGGVLLLILI), 37–57 (GPMTELAVGLLGIAILTLVLG), 77–97 (FMKVLVLIGSLVSLIMGQTYL), 109–129 (ILILLSTLGMLMLISATGLIA), 162–182 (FVLGALSSGMLLYGASLIYGF), 201–221 (LGVVFGLVFLTAGLAFKMSTV), 233–253 (GAPTPVTAFFASAPKLAAIAI), 272–292 (IIVFISILSMALGSFAAIGQT), 297–317 (LMAYSSIGHMGFALVGLAAGT), 323–343 (GVLAYMAIYLVMTLGTFAAIL), 369–389 (AFFLAIMMFSLAGIPPLAGFF), 402–424 (HLYPLAVIGVLCSTVGAYYYLRI), and 446–466 (AVLIVTGLAVLLLCVYPGSFV).

It belongs to the complex I subunit 2 family. As to quaternary structure, NDH-1 is composed of 14 different subunits. Subunits NuoA, H, J, K, L, M, N constitute the membrane sector of the complex.

It localises to the cell inner membrane. It carries out the reaction a quinone + NADH + 5 H(+)(in) = a quinol + NAD(+) + 4 H(+)(out). NDH-1 shuttles electrons from NADH, via FMN and iron-sulfur (Fe-S) centers, to quinones in the respiratory chain. The immediate electron acceptor for the enzyme in this species is believed to be ubiquinone. Couples the redox reaction to proton translocation (for every two electrons transferred, four hydrogen ions are translocated across the cytoplasmic membrane), and thus conserves the redox energy in a proton gradient. The protein is NADH-quinone oxidoreductase subunit N of Beijerinckia indica subsp. indica (strain ATCC 9039 / DSM 1715 / NCIMB 8712).